A 166-amino-acid chain; its full sequence is Orotate phosphoribosyltransferase (166 aa).

5-phospho-alpha-D-ribose 1-diphosphate-binding positions include arginine 83, lysine 84, arginine 86, histidine 88, and 108–116; that span reads EDVVTTGNS. Residues threonine 112 and arginine 140 each contribute to the orotate site.

The protein belongs to the purine/pyrimidine phosphoribosyltransferase family. PyrE subfamily. Homodimer. Mg(2+) is required as a cofactor.

The catalysed reaction is orotidine 5'-phosphate + diphosphate = orotate + 5-phospho-alpha-D-ribose 1-diphosphate. The protein operates within pyrimidine metabolism; UMP biosynthesis via de novo pathway; UMP from orotate: step 1/2. In terms of biological role, catalyzes the transfer of a ribosyl phosphate group from 5-phosphoribose 1-diphosphate to orotate, leading to the formation of orotidine monophosphate (OMP). The polypeptide is Orotate phosphoribosyltransferase (Thermoplasma volcanium (strain ATCC 51530 / DSM 4299 / JCM 9571 / NBRC 15438 / GSS1)).